A 122-amino-acid chain; its full sequence is Large ribosomal subunit protein uL14 (122 aa).

This sequence belongs to the universal ribosomal protein uL14 family. As to quaternary structure, part of the 50S ribosomal subunit. Forms a cluster with proteins L3 and L19. In the 70S ribosome, L14 and L19 interact and together make contacts with the 16S rRNA in bridges B5 and B8.

Binds to 23S rRNA. Forms part of two intersubunit bridges in the 70S ribosome. The sequence is that of Large ribosomal subunit protein uL14 from Rickettsia massiliae (strain Mtu5).